We begin with the raw amino-acid sequence, 495 residues long: Major facilitator-type transporter hxnP (495 aa).

The interval Met-1 to Glu-24 is disordered. Transmembrane regions (helical) follow at residues Ser-36–Phe-55, Leu-84–Ile-104, Val-123–Ile-143, Ile-145–Phe-165, and Val-177–Phe-197. Asn-200 is a glycosylation site (N-linked (GlcNAc...) asparagine). 5 helical membrane passes run Trp-209–Leu-229, Val-282–Val-302, Leu-314–Ser-334, Ser-341–Ile-361, and Gly-368–Val-388. N-linked (GlcNAc...) asparagine glycosylation occurs at Asn-395. A run of 2 helical transmembrane segments spans residues Ala-404–Phe-424 and Leu-436–Trp-456.

Belongs to the major facilitator superfamily.

The protein localises to the cell membrane. Functionally, major facilitator-type transporter, part of the hnx cluster involved in the purine degradation. The nicotinate hydroxylase hnxS accepts nicotinate as a substrate and catalyzes the first step of nicotinate catabolism. The major facilitator-type transporters hxnP and hxnZ are probably involved in the uptake of nicotinate-derived metabolites, and the oxidoreductases hxnT and hxnY in the further metabolism of 6-OH nicotinic acid. The polypeptide is Major facilitator-type transporter hxnP (Emericella nidulans (strain FGSC A4 / ATCC 38163 / CBS 112.46 / NRRL 194 / M139) (Aspergillus nidulans)).